A 444-amino-acid chain; its full sequence is MANVVVIGAQWGDEGKGKITDLLSRSADVVVRYQGGVNAGHTVVVGEQTLKLHLIPSGILYPDTQCIIGSGTVIDPKVLLGEVEMLEQLGISTDHLLISQTAHVTMPYHRLIDQASEQQRGSHKIGTTGRGIGPTYADKSERTGIRILDLMDPEGLREQLTWTIAQKNVILDKLYGLPPLDAESVIEEYSGYAERLRPHVVDSSLTIDEAWRKRKNILFEGAQGTLLDLDHGTYPYVTSSNPVAGGACIGAGVGPTIIDRVIGVAKAYTTRVGEGPFPTELHGDIGELLCQRGAEFGTTTGRRRRCGWFDAVIGRYAVRINGIDCLAITKLDVLDDLDEIQVCVAYDIDGERCDHFPSSARSFANCQPIYKTVPGWKQSTSHCRNLEDLPKAALDYLKFLAELMEVPIAIVSLGASRDQTIIVEDPIHGPKRALLHTNGDSSAS.

GTP is bound by residues 12–18 and 40–42; these read GDEGKGK and GHT. The active-site Proton acceptor is the Asp-13. 2 residues coordinate Mg(2+): Asp-13 and Gly-40. Residues 13–16, 38–41, Thr-128, Arg-142, Gln-223, Thr-238, and Arg-302 each bind IMP; these read DEGK and NAGH. His-41 acts as the Proton donor in catalysis. Residue 298–304 coordinates substrate; it reads TTTGRRR. GTP is bound by residues Arg-304, 330 to 332, and 412 to 414; these read KLD and SLG.

This sequence belongs to the adenylosuccinate synthetase family. Homodimer. Mg(2+) is required as a cofactor.

It localises to the cytoplasm. It carries out the reaction IMP + L-aspartate + GTP = N(6)-(1,2-dicarboxyethyl)-AMP + GDP + phosphate + 2 H(+). Its pathway is purine metabolism; AMP biosynthesis via de novo pathway; AMP from IMP: step 1/2. In terms of biological role, plays an important role in the de novo pathway of purine nucleotide biosynthesis. Catalyzes the first committed step in the biosynthesis of AMP from IMP. This is Adenylosuccinate synthetase from Synechococcus sp. (strain ATCC 27144 / PCC 6301 / SAUG 1402/1) (Anacystis nidulans).